We begin with the raw amino-acid sequence, 4128 residues long: DNA-dependent protein kinase catalytic subunit (4128 aa).

An N6-acetyllysine modification is found at K117. The HEAT 1 repeat unit spans residues 288–323 (DNYVSLFEVLLKWCAHTNVELKKAALSALESFLKQV). A phosphoserine mark is found at S511 and S687. Position 828 is an N6-acetyllysine (K828). Phosphoserine is present on residues S841 and S893. The HEAT 2 repeat unit spans residues 1004-1040 (QDTVALLEAILDGIVDPVDSTLRDFCGRCIREFLKWS). S1065 bears the Phosphoserine mark. N6-acetyllysine is present on K1209. Residues 1503–1538 (LDLSCKQLASGLLELAFAFGGLCERLVSLLLNPAVL) form an interaction with C1D region. Positions 1503–1538 (LDLSCKQLASGLLELAFAFGGLCERLVSLLLNPAVL) are leucine-zipper. The stretch at 1723-1756 (PMQSREFPPGTPRFNNYVDCMKKFLDALELSQSP) is one TPR 1 repeat. K1970 is modified (N6-acetyllysine). A disordered region spans residues 2050 to 2073 (QSYSYSSQDPRPATGRFRRREQRD). A Phosphoserine; by autocatalysis modification is found at S2056. Residue K2259 is modified to N6-acetyllysine. A KIP-binding region spans residues 2436-3212 (LDIIYKMMPK…DNSMNVDQDG (777 aa)). T2535 is subject to Phosphothreonine. T2609 bears the Phosphothreonine; by autocatalysis mark. S2612 is modified (phosphoserine; by autocatalysis). Phosphothreonine; by autocatalysis occurs at positions 2638 and 2647. Residues 2737-2765 (EKLSLMYARKGVAEQKREKEIKSELKMKQ) are may split the end of the DNA molecule, with the two strands separating around the region. Position 2789 is a phosphoserine (S2789). Residues 2906–3539 (PAKRVRGKAR…VYPFIISSES (634 aa)) form the FAT domain. TPR repeat units follow at residues 2920-2948 (VLRW…SEIG) and 2949-2982 (TKQI…QDWV). The interval 3200 to 3222 (LPEDNSMNVDQDGDPSDRMEVQE) is disordered. S3205 carries the phosphoserine modification. K3241, K3260, K3621, K3638, and K3642 each carry N6-acetyllysine. Positions 3722 to 4053 (FDERVTVMAS…ICYAKRKLAG (332 aa)) constitute a PI3K/PI4K catalytic domain. Residues 3728-3734 (VMASLRR) are G-loop. S3731 and S3821 each carry phosphoserine. Residues 3919 to 3927 (GIGDRHLNN) form a catalytic loop region. Positions 3939 to 3964 (GIDFGHAFGSATQFLPVPELMPFRLT) are activation loop. Phosphoserine is present on S4026. Positions 4096–4128 (SGLSEETQVKCLMDQATDPNILGRTWEGWEPWM) constitute an FATC domain.

Belongs to the PI3/PI4-kinase family. DNA-PK is a heterotrimer of PRKDC and the Ku dimer (composed of XRCC6/Ku70 and XRCC5/Ku86). Formation of this complex may be promoted by interaction with ILF3. Component of the core long-range non-homologous end joining (NHEJ) complex (also named DNA-PK complex) composed of PRKDC, LIG4, XRCC4, XRCC6/Ku70, XRCC5/Ku86 and NHEJ1/XLF. Additional component of the NHEJ complex includes PAXX. Following autophosphorylation, PRKDC dissociates from DNA. Interacts with DNA-PKcs-interacting protein (KIP) with the region upstream the kinase domain. PRKDC alone also interacts with and phosphorylates DCLRE1C, thereby activating the latent endonuclease activity of this protein. Interacts with C1D. Interacts with TTI1 and TELO2. Interacts with CIB1. Interacts with SETX. Interacts with NR4A3; the DNA-dependent protein kinase complex DNA-PK phosphorylates and activates NR4A3 and prevents NR4A3 ubiquitination and degradation. Interacts with BRAT1. Part of the HDP-RNP complex composed of at least HEXIM1, PRKDC, XRCC5, XRCC6, paraspeckle proteins (SFPQ, NONO, PSPC1, RBM14, and MATR3) and NEAT1 RNA. Interacts with KAT5. Autophosphorylated at two clusters, the T2609 cluster and the S2056 cluster. Autophosphorylated on Ser-2056, Thr-2609, Thr-2638 and Thr-2647. Ser-2056 and Thr-2609 are DNA damage-inducible phosphorylation sites (inducible with ionizing radiation, IR) dephosphorylated by PPP5C. Autophosphorylation induces a conformational change that leads to remodeling of the DNA-PK complex, requisite for efficient end processing and DNA repair. Autophosphorylation in trans within DNA-PK complexes loaded on DNA ends leads to the dissociation of PRKDC from DNA and the transition into the short-range NHEJ complex. Autophosphorylation of the T2609 cluster is required for hematopoietic development and protein synthesis in erythrocytes precursors. In terms of processing, S-nitrosylated by GAPDH. Post-translationally, polyubiquitinated by RNF144A, leading to proteasomal degradation.

It is found in the nucleus. Its subcellular location is the nucleolus. The protein resides in the cytoplasm. The protein localises to the cytosol. It carries out the reaction L-seryl-[protein] + ATP = O-phospho-L-seryl-[protein] + ADP + H(+). The catalysed reaction is L-threonyl-[protein] + ATP = O-phospho-L-threonyl-[protein] + ADP + H(+). Its activity is regulated as follows. Activity seems to be attenuated by autophosphorylation. Binding to the SL1 region of U3 small nucleolar RNA promotes auto-phosphorylation activity. Inhibited by wortmannin. In terms of biological role, serine/threonine-protein kinase that acts as a molecular sensor for DNA damage. Involved in DNA non-homologous end joining (NHEJ) required for double-strand break (DSB) repair and V(D)J recombination. Must be bound to DNA to express its catalytic properties. Promotes processing of hairpin DNA structures in V(D)J recombination by activation of the hairpin endonuclease artemis (DCLRE1C). Recruited by XRCC5 and XRCC6 to DNA ends and is required to (1) protect and align broken ends of DNA, thereby preventing their degradation, (2) and sequester the DSB for repair by NHEJ. Acts as a scaffold protein to aid the localization of DNA repair proteins to the site of damage. The assembly of the DNA-PK complex at DNA ends is also required for the NHEJ ligation step. Found at the ends of chromosomes, suggesting a further role in the maintenance of telomeric stability and the prevention of chromosomal end fusion. Also involved in modulation of transcription. As part of the DNA-PK complex, involved in the early steps of ribosome assembly by promoting the processing of precursor rRNA into mature 18S rRNA in the small-subunit processome. Binding to U3 small nucleolar RNA, recruits PRKDC and XRCC5/Ku86 to the small-subunit processome. Recognizes the substrate consensus sequence [ST]-Q. Phosphorylates 'Ser-139' of histone variant H2AX, thereby regulating DNA damage response mechanism. Phosphorylates ASF1A, DCLRE1C, c-Abl/ABL1, histone H1, HSPCA, c-jun/JUN, p53/TP53, PARP1, POU2F1, DHX9, FH, SRF, NHEJ1/XLF, XRCC1, XRCC4, XRCC5, XRCC6, WRN, MYC and RFA2. Can phosphorylate C1D not only in the presence of linear DNA but also in the presence of supercoiled DNA. Ability to phosphorylate p53/TP53 in the presence of supercoiled DNA is dependent on C1D. Acts as a regulator of the phosphatidylinositol 3-kinase/protein kinase B signal transduction by mediating phosphorylation of 'Ser-473' of protein kinase B (PKB/AKT1, PKB/AKT2, PKB/AKT3), promoting their activation. Contributes to the determination of the circadian period length by antagonizing phosphorylation of CRY1 'Ser-588' and increasing CRY1 protein stability, most likely through an indirect mechanism. Plays a role in the regulation of DNA virus-mediated innate immune response by assembling into the HDP-RNP complex, a complex that serves as a platform for IRF3 phosphorylation and subsequent innate immune response activation through the cGAS-STING pathway. Also regulates the cGAS-STING pathway by catalyzing phosphorylation of CGAS, thereby impairing CGAS oligomerization and activation. Also regulates the cGAS-STING pathway by mediating phosphorylation of PARP1. The polypeptide is DNA-dependent protein kinase catalytic subunit (PRKDC) (Homo sapiens (Human)).